The chain runs to 419 residues: MGMSATMGDSASIPGVFFADFGPAPPEITPEGYHEVELNKTKWVLPQWYNSLKPLGEGAYGVVCTAEYEPTGDRVAIKKFFRPFQSTIHAKRTYRELKLLRTLQHDNVLEMIDVFTPDPDASSLNNVYFVSVLMGSDLQNIMKIQRLTDEQIQLLIYQVLRGLKYIHSAGIIHRDLKPSNIAVNERCEVKVFLSFSQLSFLILSFFKILDFGLARAQDAEMTGYVATRWYRAPEIMLNWMHYTQTVDVWSVGCILAELVSGRPLFPGDDHIDQLTKIMSVVGTPKEEFWSKIQSEEARNYIKNRSPIIRQDFVTLFPMASPYALELLEMMLILDPDRRISVSSALRHDYLREYSVPNDEPVAMDTVINSIVTIDPAEERATTLSDWRELIWNEIRLFQNSARRLSFVSCTDTEEEPMKI.

The Protein kinase domain occupies 49–350 (YNSLKPLGEG…VSSALRHDYL (302 aa)). Residues 55–63 (LGEGAYGVV) and Lys78 contribute to the ATP site. The Proton acceptor role is filled by Asp210. Thr222 is subject to Phosphothreonine. Residues 222–224 (TGY) carry the TXY motif. Tyr224 carries the phosphotyrosine modification.

It belongs to the protein kinase superfamily. CMGC Ser/Thr protein kinase family. MAP kinase subfamily. Requires Mg(2+) as cofactor. Post-translationally, dually phosphorylated on Thr-222 and Tyr-224, which activates the enzyme.

It is found in the cytoplasm. It catalyses the reaction L-seryl-[protein] + ATP = O-phospho-L-seryl-[protein] + ADP + H(+). The catalysed reaction is L-threonyl-[protein] + ATP = O-phospho-L-threonyl-[protein] + ADP + H(+). With respect to regulation, activated by phosphorylation on threonine and tyrosine. Inhibited by pyridinyl-imidazole related compounds. Responds to activation by environmental stress and pro-inflammatory cytokines by phosphorylating downstream targets. This Caenorhabditis elegans protein is Mitogen-activated protein kinase pmk-2 (pmk-2).